Reading from the N-terminus, the 179-residue chain is Large ribosomal subunit protein uL5 (179 aa).

This sequence belongs to the universal ribosomal protein uL5 family. In terms of assembly, part of the 50S ribosomal subunit; part of the 5S rRNA/L5/L18/L25 subcomplex. Contacts the 5S rRNA and the P site tRNA. Forms a bridge to the 30S subunit in the 70S ribosome.

This is one of the proteins that bind and probably mediate the attachment of the 5S RNA into the large ribosomal subunit, where it forms part of the central protuberance. In the 70S ribosome it contacts protein S13 of the 30S subunit (bridge B1b), connecting the 2 subunits; this bridge is implicated in subunit movement. Contacts the P site tRNA; the 5S rRNA and some of its associated proteins might help stabilize positioning of ribosome-bound tRNAs. This chain is Large ribosomal subunit protein uL5, found in Staphylococcus epidermidis (strain ATCC 35984 / DSM 28319 / BCRC 17069 / CCUG 31568 / BM 3577 / RP62A).